The sequence spans 166 residues: NADPH-dependent 7-cyano-7-deazaguanine reductase (166 aa).

The active-site Thioimide intermediate is C57. Catalysis depends on D64, which acts as the Proton donor. Residues 79–81 and 98–99 contribute to the substrate site; these read VES and HE.

The protein belongs to the GTP cyclohydrolase I family. QueF type 1 subfamily.

Its subcellular location is the cytoplasm. The enzyme catalyses 7-aminomethyl-7-carbaguanine + 2 NADP(+) = 7-cyano-7-deazaguanine + 2 NADPH + 3 H(+). The protein operates within tRNA modification; tRNA-queuosine biosynthesis. Functionally, catalyzes the NADPH-dependent reduction of 7-cyano-7-deazaguanine (preQ0) to 7-aminomethyl-7-deazaguanine (preQ1). This Staphylococcus haemolyticus (strain JCSC1435) protein is NADPH-dependent 7-cyano-7-deazaguanine reductase.